The following is a 166-amino-acid chain: Nucleotide-binding protein Dred_1927 (166 aa).

The protein belongs to the YajQ family.

Functionally, nucleotide-binding protein. The sequence is that of Nucleotide-binding protein Dred_1927 from Desulforamulus reducens (strain ATCC BAA-1160 / DSM 100696 / MI-1) (Desulfotomaculum reducens).